The chain runs to 155 residues: Aspartate carbamoyltransferase regulatory chain (155 aa).

Zn(2+) is bound by residues Cys110, Cys115, Cys139, and Cys142.

Belongs to the PyrI family. As to quaternary structure, contains catalytic and regulatory chains. Zn(2+) is required as a cofactor.

Involved in allosteric regulation of aspartate carbamoyltransferase. The sequence is that of Aspartate carbamoyltransferase regulatory chain from Yersinia pseudotuberculosis serotype IB (strain PB1/+).